Here is a 179-residue protein sequence, read N- to C-terminus: Sec-independent protein translocase protein TatB (179 aa).

The helical transmembrane segment at 1-21 (MLDLGLSKMALIGVVALVVLG) threads the bilayer. Over residues 101–115 (GAAGDAGSVGSPGSD) the composition is skewed to low complexity. Residues 101–134 (GAAGDAGSVGSPGSDTPAAPSWRGSSAALAPKRR) form a disordered region.

This sequence belongs to the TatB family. As to quaternary structure, the Tat system comprises two distinct complexes: a TatABC complex, containing multiple copies of TatA, TatB and TatC subunits, and a separate TatA complex, containing only TatA subunits. Substrates initially bind to the TatABC complex, which probably triggers association of the separate TatA complex to form the active translocon.

It is found in the cell inner membrane. Part of the twin-arginine translocation (Tat) system that transports large folded proteins containing a characteristic twin-arginine motif in their signal peptide across membranes. Together with TatC, TatB is part of a receptor directly interacting with Tat signal peptides. TatB may form an oligomeric binding site that transiently accommodates folded Tat precursor proteins before their translocation. The chain is Sec-independent protein translocase protein TatB from Burkholderia orbicola (strain AU 1054).